We begin with the raw amino-acid sequence, 1508 residues long: Pleiotropic ABC efflux transporter of multiple drugs CDR1 (1508 aa).

A disordered region spans residues 1–30 (MSEKPFVDAPPPEDGVAHQVSPHDNGSLSE). The Cytoplasmic portion of the chain corresponds to 1 to 524 (MSEKPFVDAP…NFLRMKGDPS (524 aa)). Residues 165–415 (DYWHDMRKID…FLDMGYECPQ (251 aa)) enclose the ABC transporter 1 domain. A helical transmembrane segment spans residues 525–545 (IVIFSIFGQGVMGLILSSVFY). Over 546–559 (NLQPTTGSFYYRGA) the chain is Extracellular. Residues 560 to 580 (AMFFAVLFNAFASLLEIMSLF) traverse the membrane as a helical segment. The Cytoplasmic portion of the chain corresponds to 581-608 (EARPIVEKHKKYALYRPSADALASIISE). The chain crosses the membrane as a helical span at residues 609 to 629 (LPVKLCMSTCFNFSFYFMVHF). Residues 630–633 (RRDP) lie on the Extracellular side of the membrane. The chain crosses the membrane as a helical span at residues 634–654 (GRFFFYWLFCGLCTLCMSHMF). The Cytoplasmic portion of the chain corresponds to 655 to 673 (RSLGAVSTSLAAAMTPATS). A helical transmembrane segment spans residues 674–694 (VLLAMVIFTGFVIPIPSMLGW). Topologically, residues 695–775 (CRWIQYINPV…EYVNAHKWRN (81 aa)) are extracellular. The chain crosses the membrane as a helical span at residues 776–796 (LGIVVAYIVVFLGVYIALTEF). Topologically, residues 797–1203 (NKGAMQKGEI…TFQQYWRSPG (407 aa)) are cytoplasmic. The tract at residues 839 to 860 (KISYSDAMEKDSGESSTSDDKL) is disordered. Basic and acidic residues predominate over residues 845–860 (AMEKDSGESSTSDDKL). The ABC transporter 2 domain maps to 867-1110 (FHWKDLTYQV…GLIDYFEKHG (244 aa)). Position 903 to 910 (903 to 910 (GASGAGKT)) interacts with ATP. A helical membrane pass occupies residues 1204-1224 (YIYSKFFLVITASLFNGFAFF). Residues 1225–1239 (HSGTSQQGLQNQMFS) are Extracellular-facing. Residues 1240-1260 (MFMFYMPLQTLIQQMLPYYVM) traverse the membrane as a helical segment. Topologically, residues 1261–1288 (QREIYEVREAPSRTFSWFAFIASQITTE) are cytoplasmic. Residues 1289 to 1309 (IPFQVVLGTVAFFCWYYPVGL) form a helical membrane-spanning segment. Residues 1310 to 1326 (YQNATPTDTVHERGALM) are Extracellular-facing. Residues 1327–1347 (WLLVTAFYVYTISLGQMVVAF) traverse the membrane as a helical segment. Over 1348 to 1362 (MEIADNAANMVNLMF) the chain is Cytoplasmic. Residues 1363–1383 (IMCLNFCGVLATPEALPGFWI) traverse the membrane as a helical segment. At 1384-1475 (FMYRCNPFTY…HAVYSERWRN (92 aa)) the chain is on the extracellular side. A helical membrane pass occupies residues 1476 to 1496 (FGIFIAFIAINMIGTIFFYWL). Residues 1497-1508 (ARVPKSSKSKNH) are Cytoplasmic-facing.

Belongs to the ABC transporter superfamily.

The protein localises to the cell membrane. It catalyses the reaction fluconazole(in) + ATP + H2O = fluconazole(out) + ADP + phosphate + H(+). The enzyme catalyses itraconazole(in) + ATP + H2O = itraconazole(out) + ADP + phosphate + H(+). It carries out the reaction voriconazole(in) + ATP + H2O = voriconazole(out) + ADP + phosphate + H(+). The bis-benzodioxolylindolinone azoffluxin acts as an inhibitor of the transporter activity. Clorgyline analogs M19 and M25 inhibit the transcporter activity by uncoupling CDR1 ATPase activity from the active transport of substrates. Activity is also inhibited by beauvericin and oligomycin. Functionally, pleiotropic ABC efflux transporter that confers resistance to numerous chemicals including itraconazole, fluconazole, voriconazole and posaconazole. This is Pleiotropic ABC efflux transporter of multiple drugs CDR1 from Candidozyma auris (Yeast).